The sequence spans 319 residues: Probable NAD(P)H-dependent D-xylose reductase xyl1 (319 aa).

The active-site Proton donor is the tyrosine 50. Residue histidine 112 participates in substrate binding. NAD(+) is bound by residues serine 166–asparagine 167, serine 215–glutamate 224, and lysine 271–asparagine 281.

The protein belongs to the aldo/keto reductase family.

It catalyses the reaction xylitol + NAD(+) = D-xylose + NADH + H(+). It carries out the reaction xylitol + NADP(+) = D-xylose + NADPH + H(+). The protein operates within carbohydrate metabolism; D-xylose degradation. Its function is as follows. Catalyzes the initial reaction in the xylose utilization pathway by reducing D-xylose into xylitol. Xylose is a major component of hemicelluloses such as xylan. Most fungi utilize D-xylose via three enzymatic reactions, xylose reductase (XR), xylitol dehydrogenase (XDH), and xylulokinase, to form xylulose 5-phosphate, which enters pentose phosphate pathway. This Emericella nidulans (strain FGSC A4 / ATCC 38163 / CBS 112.46 / NRRL 194 / M139) (Aspergillus nidulans) protein is Probable NAD(P)H-dependent D-xylose reductase xyl1 (xyl1).